The following is a 428-amino-acid chain: Small ribosomal subunit protein uS2m (428 aa).

Residues 30–50 (FLSQDNFTAPPPPPTNSKKQA) form a disordered region.

This sequence belongs to the universal ribosomal protein uS2 family. In terms of assembly, component of the mitochondrial small ribosomal subunit (mt-SSU). Mature N.crassa 74S mitochondrial ribosomes consist of a small (37S) and a large (54S) subunit. The 37S small subunit contains a 16S ribosomal RNA (16S mt-rRNA) and 32 different proteins. The 54S large subunit contains a 23S rRNA (23S mt-rRNA) and 42 different proteins.

The protein localises to the mitochondrion. Its function is as follows. Component of the mitochondrial ribosome (mitoribosome), a dedicated translation machinery responsible for the synthesis of mitochondrial genome-encoded proteins, including at least some of the essential transmembrane subunits of the mitochondrial respiratory chain. The mitoribosomes are attached to the mitochondrial inner membrane and translation products are cotranslationally integrated into the membrane. This Neurospora crassa (strain ATCC 24698 / 74-OR23-1A / CBS 708.71 / DSM 1257 / FGSC 987) protein is Small ribosomal subunit protein uS2m (mrp4).